We begin with the raw amino-acid sequence, 1849 residues long: MAVSRLDRLFILLDTGTTPVTRKAAAQQLGEVVKLHPHELNNLLSKVLIYLRSANWDTRIAAGQAVEAIVKNVPEWNPVPRTRQEPTSESSMEDSPTTERLNFDRFDICRLLQHGASLLGSAGAEFEVQDEKSGEVDPKERIARQRKLLQKKLGLNMGEAIGMSTEELFNDEDLDYTPTSASFVNKQPTLQAAELIDSEFRAGMSNRQKNKAKRMAKLFAKQRSRDAVETNEKSNDSTDGEPEEKRRKIANVVINQSANDSKVLIDNIPDSSSLIEETNEWPLESFCEELCNDLFNPSWEVRHGAGTGLREILKAHGKSGGKMGDSTLEEMIQQHQEWLEDLVIRLLCVFALDRFGDFVSDEVVAPVRETCAQTLGVVLKHMNETGVHKTVDVLLKLLTQEQWEVRHGGLLGIKYALAVRQDVINTLLPKVLTRIIEGLQDLDDDVRAVAAASLVPVVESLVYLQTQKVPFIINTLWDALLELDDLTASTNSIMTLLSSLLTYPQVQQCSIQQSLTVLVPRVWPFLHHTISSVRRAALETLFTLLSTQDQNSSSWLIPILPDMLRHIFQFCVLESSQEILDLIHKVWMELLSKASVQYVVAAACPWMGAWLCLMMQPSHLPIDLNMLLEVKARAKEKTGGKVRQGQSQNKEVLQEYIAGADTIMEDPATRDFVVMRARMMAAKLLGALCCCICDPGVNVVTQEIKPAESLGQLLLFHLNSKSALQRISVALVICEWAALQKECKAVTLAVQPRLLDILSEHLYYDEIAVPFTRMQNECKQLISSLADVHIEVGNRVNNNVLTIDQASDLVTTVFNEATSSFDLNPQVLQQLDSKRQQVQMTVTETNQEWQVLQLRVHTFAACAVVSLQQLPEKLNPIIKPLMETIKKEENTLVQNYAAQCIAKLLQQCTTRTPCPNSKIIKNLCSSLCVDPYLTPCVTCPVPTQSGQENSKGSTSEKDGMHHTVTKHRGIITLYRHQKAAFAITSRRGPTPKAVKAQIADLPAGSSGNILVELDEAQKPYLVQRRGAEFALTTIVKHFGGEMAVKLPHLWDAMVGPLRNTIDINNFDGKSLLDKGDSPAQELVNSLQVFETAAASMDSELHPLLVQHLPHLYMCLQYPSTAVRHMAARCVGVMSKIATMETMNIFLEKVLPWLGAIDDSVKQEGAIEALACVMEQLDVGIVPYIVLLVVPVLGRMSDQTDSVRFMATQCFATLIRLMPLEAGIPDPPNMSAELIQLKAKERHFLEQLLDGKKLENYKIPVPINAELRKYQQDGVNWLAFLNKYKLHGILCDDMGLGKTLQSICILAGDHCHRAQEYARSKLAECMPLPSLVVCPPTLTGHWVDEVGKFCSREYLNPLHYTGPPTERIRLQHQVKRHNLIVASYDVVRNDIDFFRNIKFNYCILDEGHVIKNGKTKLSKAVKQLTANYRIILSGTPIQNNVLELWSLFDFLMPGFLGTERQFAARYGKPILASRDARSSSREQEAGVLAMDALHRQVLPFLLRRMKEDVLQDLPPKIIQDYYCTLSPLQVQLYEDFAKSRAKCDVDETVSSATLSEETEKPKLKATGHVFQALQYLRKLCNHPALVLTPQHPEFKTTAEKLAVQNSSLHDIQHAPKLSALKQLLLDCGLGNGSTSESGTESVVAQHRILIFCQLKSMLDIVEHDLLKPHLPSVTYLRLDGSIPPGQRHSIVSRFNNDPSIDVLLLTTHVGGLGLNLTGADTVVFVEHDWNPMRDLQAMDRAHRIGQKRVVNVYRLITRGTLEEKIMGLQKFKMNIANTVISQENSSLQSMGTDQLLDLFTLDKDGKAEKADTSTSGKASMKSILENLSDLWDQEQYDSEYSLENFMHSLK.

The interval 77–97 (NPVPRTRQEPTSESSMEDSPT) is disordered. Positions 85-97 (EPTSESSMEDSPT) are enriched in polar residues. Phosphoserine is present on residues S91 and S95. The Nuclear localization signal motif lies at 191 to 207 (QAAELIDSEFRAGMSNR). Residues 219 to 247 (FAKQRSRDAVETNEKSNDSTDGEPEEKRR) are disordered. Residues 223–236 (RSRDAVETNEKSND) show a composition bias toward basic and acidic residues. HEAT repeat units follow at residues 385–422 (TGVHKTVDVLLKLLTQEQWEVRHGGLLGIKYALAVRQD), 426–463 (TLLPKVLTRIIEGLQDLDDDVRAVAAASLVPVVESLVY), 513–550 (QSLTVLVPRVWPFLHHTISSVRRAALETLFTLLSTQDQ), 554–596 (SWLI…KASV), 818–855 (TSSFDLNPQVLQQLDSKRQQVQMTVTETNQEWQVLQLR), 872–910 (EKLNPIIKPLMETIKKEENTLVQNYAAQCIAKLLQQCTT), 1102–1139 (PLLVQHLPHLYMCLQYPSTAVRHMAARCVGVMSKIATM), and 1182–1219 (PYIVLLVVPVLGRMSDQTDSVRFMATQCFATLIRLMPL). The 176-residue stretch at 1278–1453 (AFLNKYKLHG…WSLFDFLMPG (176 aa)) folds into the Helicase ATP-binding domain. 1291 to 1298 (DDMGLGKT) lines the ATP pocket. Residues 1404-1407 (DEGH) carry the DEGH box motif. One can recognise a Helicase C-terminal domain in the interval 1636–1790 (SGTESVVAQH…QENSSLQSMG (155 aa)).

Belongs to the SNF2/RAD54 helicase family. In terms of assembly, associates with TBP to form B-TFIID. Binds DRAP1.

The protein resides in the nucleus. In terms of biological role, regulates transcription in association with TATA binding protein (TBP). Removes TBP from the TATA box in an ATP-dependent manner. The protein is TATA-binding protein-associated factor 172 (BTAF1) of Homo sapiens (Human).